The sequence spans 443 residues: Serine/threonine-protein kinase SSN3 (443 aa).

Positions 1–24 (MERKRGREMNPPSADPPSATPVAR) are disordered. A Protein kinase domain is found at 54-384 (YKIVGFISSG…AEKALEHRYF (331 aa)). Residues 60 to 68 (ISSGTYGRV) and Lys-84 each bind ATP. Asp-185 functions as the Proton acceptor in the catalytic mechanism. Positions 405 to 443 (RRVSQEDNDIRTSSLPGTKRSGLPDDSLMGRPAKRLKEG) are disordered.

This sequence belongs to the protein kinase superfamily. CMGC Ser/Thr protein kinase family. CDC2/CDKX subfamily. Component of the srb8-11 complex, a regulatory module of the Mediator complex. It depends on Mg(2+) as a cofactor.

The protein localises to the nucleus. It catalyses the reaction L-seryl-[protein] + ATP = O-phospho-L-seryl-[protein] + ADP + H(+). It carries out the reaction L-threonyl-[protein] + ATP = O-phospho-L-threonyl-[protein] + ADP + H(+). The enzyme catalyses [DNA-directed RNA polymerase] + ATP = phospho-[DNA-directed RNA polymerase] + ADP + H(+). Component of the srb8-11 complex. The srb8-11 complex is a regulatory module of the Mediator complex which is itself dependent transcription. The srb8-11 complex may be involved in the transcriptional repression of a subset of genes regulated by Mediator. It may inhibit the association of the Mediator complex with RNA polymerase II to form the holoenzyme complex. The srb8-11 complex phosphorylates the C-terminal domain (CTD) of the largest subunit of RNA polymerase II. This Phaeosphaeria nodorum (strain SN15 / ATCC MYA-4574 / FGSC 10173) (Glume blotch fungus) protein is Serine/threonine-protein kinase SSN3 (SSN3).